Reading from the N-terminus, the 275-residue chain is Nitrogenase iron protein 2 (275 aa).

ATP is bound at residue 9–16; that stretch reads GKGGIGKS. Cysteine 97 is a [4Fe-4S] cluster binding site. Arginine 100 is modified (ADP-ribosylarginine; by dinitrogenase reductase ADP-ribosyltransferase). Residue cysteine 132 participates in [4Fe-4S] cluster binding.

Belongs to the NifH/BchL/ChlL family. Homodimer. [4Fe-4S] cluster is required as a cofactor. In terms of processing, the reversible ADP-ribosylation of Arg-100 inactivates the nitrogenase reductase and regulates nitrogenase activity.

The catalysed reaction is N2 + 8 reduced [2Fe-2S]-[ferredoxin] + 16 ATP + 16 H2O = H2 + 8 oxidized [2Fe-2S]-[ferredoxin] + 2 NH4(+) + 16 ADP + 16 phosphate + 6 H(+). The key enzymatic reactions in nitrogen fixation are catalyzed by the nitrogenase complex, which has 2 components: the iron protein (component 2) and a component 1 which is either a molybdenum-iron protein, a vanadium-iron, or an iron-iron protein. This is Nitrogenase iron protein 2 (anfH) from Rhodobacter capsulatus (Rhodopseudomonas capsulata).